The sequence spans 384 residues: Lipoyl synthase 2, chloroplastic (384 aa).

Residues 1 to 48 (MAAYCSRVYHHHPVSPSTMQGSLARPSIHAGSASLTFRARPNSVSIVR) constitute a chloroplast transit peptide. Positions 108, 113, 119, 145, 149, 152, and 360 each coordinate [4Fe-4S] cluster. Residues 128 to 349 (GDGDGIATAT…KEYGESLGFL (222 aa)) form the Radical SAM core domain.

This sequence belongs to the radical SAM superfamily. Lipoyl synthase family. It depends on [4Fe-4S] cluster as a cofactor.

The protein resides in the plastid. The protein localises to the chloroplast. The catalysed reaction is [[Fe-S] cluster scaffold protein carrying a second [4Fe-4S](2+) cluster] + N(6)-octanoyl-L-lysyl-[protein] + 2 oxidized [2Fe-2S]-[ferredoxin] + 2 S-adenosyl-L-methionine + 4 H(+) = [[Fe-S] cluster scaffold protein] + N(6)-[(R)-dihydrolipoyl]-L-lysyl-[protein] + 4 Fe(3+) + 2 hydrogen sulfide + 2 5'-deoxyadenosine + 2 L-methionine + 2 reduced [2Fe-2S]-[ferredoxin]. Its pathway is protein modification; protein lipoylation via endogenous pathway; protein N(6)-(lipoyl)lysine from octanoyl-[acyl-carrier-protein]: step 2/2. Its function is as follows. Catalyzes the radical-mediated insertion of two sulfur atoms into the C-6 and C-8 positions of the octanoyl moiety bound to the lipoyl domains of lipoate-dependent enzymes, thereby converting the octanoylated domains into lipoylated derivatives. In Oryza sativa subsp. indica (Rice), this protein is Lipoyl synthase 2, chloroplastic.